A 294-amino-acid polypeptide reads, in one-letter code: HTH-type transcriptional regulator ClcR (294 aa).

The HTH lysR-type domain occupies 1–58; sequence MEFRQLRYFIAVAEEGNIGAAARRLHISQPPITRQIQALEQDLGVVLFERTHRGVELT. Positions 18-37 form a DNA-binding region, H-T-H motif; it reads IGAAARRLHISQPPITRQIQ.

It belongs to the LysR transcriptional regulatory family.

The protein resides in the cytoplasm. In terms of biological role, involved in regulation of chlorinated catechol metabolism. Transcriptional activator of the clcABD chlorocatechol oxidative operon. The protein is HTH-type transcriptional regulator ClcR (clcR) of Pseudomonas putida (Arthrobacter siderocapsulatus).